The primary structure comprises 239 residues: Mitochondrial fission factor homolog B (239 aa).

Residues 1–219 lie on the Cytoplasmic side of the membrane; sequence MAEINRMQYE…ENKERVKHEM (219 aa). A disordered region spans residues 107-139; it reads EGPAPATPHSKEVRSSGHLKRDGLASENSLRQN. A compositionally biased stretch (basic and acidic residues) spans 115–130; it reads HSKEVRSSGHLKRDGL. Residues 184 to 214 are a coiled coil; that stretch reads DLALADAASLRRQIIKLNRRLLLLEEENKER. A helical; Anchor for type IV membrane protein membrane pass occupies residues 220-237; that stretch reads TMYSIIIIFGLLNSWLWF. Topologically, residues 238 to 239 are extracellular; sequence RR.

The protein belongs to the Tango11 family.

The protein resides in the mitochondrion outer membrane. It is found in the peroxisome. Functionally, plays a role in mitochondrial and peroxisomal fission. Promotes the recruitment and association of the fission mediator dynamin-related protein 1 (DNM1L) to the mitochondrial surface. The sequence is that of Mitochondrial fission factor homolog B (mff-b) from Xenopus laevis (African clawed frog).